Here is a 129-residue protein sequence, read N- to C-terminus: Putative zinc finger protein 702 (129 aa).

3 C2H2-type zinc fingers span residues 34–56 (YKCD…HRCH), 62–84 (YKCN…KAIH), and 90–112 (HKCN…HRLH).

It belongs to the krueppel C2H2-type zinc-finger protein family.

The protein localises to the nucleus. Functionally, may be involved in transcriptional regulation. This chain is Putative zinc finger protein 702 (ZNF702P), found in Homo sapiens (Human).